The sequence spans 677 residues: L-type lectin-domain containing receptor kinase IV.2 (677 aa).

The first 22 residues, 1–22 (MFVKLKLIFFFFLLCQIMISSS), serve as a signal peptide directing secretion. The Extracellular segment spans residues 23 to 291 (QNLNFTYNGF…EPRRISEFYK (269 aa)). A legume-lectin like region spans residues 24 to 262 (NLNFTYNGFH…EHFLVGWSFR (239 aa)). Residues asparagine 26, asparagine 57, asparagine 81, asparagine 128, asparagine 134, asparagine 171, asparagine 186, and asparagine 203 are each glycosylated (N-linked (GlcNAc...) asparagine). Residues 292 to 312 (IGMPLISLSLIFSIIFLAFYI) form a helical membrane-spanning segment. At 313–677 (VRRKKKYEEE…IADSLLSGGR (365 aa)) the chain is on the cytoplasmic side. Residues 347–625 (FKEKDLLGSG…LQYLRGDMAL (279 aa)) enclose the Protein kinase domain. ATP-binding positions include 353–361 (LGSGGFGRV) and lysine 376. Aspartate 472 acts as the Proton acceptor in catalysis.

This sequence in the C-terminal section; belongs to the protein kinase superfamily. Ser/Thr protein kinase family. The protein in the N-terminal section; belongs to the leguminous lectin family.

It is found in the cell membrane. The enzyme catalyses L-seryl-[protein] + ATP = O-phospho-L-seryl-[protein] + ADP + H(+). It carries out the reaction L-threonyl-[protein] + ATP = O-phospho-L-threonyl-[protein] + ADP + H(+). Functionally, required during pollen development. Involved in resistance response to the pathogenic bacteria Pseudomonas syringae. The chain is L-type lectin-domain containing receptor kinase IV.2 from Arabidopsis thaliana (Mouse-ear cress).